The following is a 398-amino-acid chain: Histidinol-phosphate aminotransferase (398 aa).

The span at methionine 1–proline 10 shows a compositional bias: polar residues. Residues methionine 1–proline 30 are disordered. Residue lysine 234 is modified to N6-(pyridoxal phosphate)lysine.

This sequence belongs to the class-II pyridoxal-phosphate-dependent aminotransferase family. Histidinol-phosphate aminotransferase subfamily. In terms of assembly, homodimer. It depends on pyridoxal 5'-phosphate as a cofactor.

It catalyses the reaction L-histidinol phosphate + 2-oxoglutarate = 3-(imidazol-4-yl)-2-oxopropyl phosphate + L-glutamate. It functions in the pathway amino-acid biosynthesis; L-histidine biosynthesis; L-histidine from 5-phospho-alpha-D-ribose 1-diphosphate: step 7/9. The sequence is that of Histidinol-phosphate aminotransferase from Mycolicibacterium paratuberculosis (strain ATCC BAA-968 / K-10) (Mycobacterium paratuberculosis).